We begin with the raw amino-acid sequence, 363 residues long: 3-dehydroquinate synthase (363 aa).

NAD(+) is bound by residues 74–79, 108–112, 132–133, Lys145, Lys154, and 172–175; these read DGEQYK, GVIGD, TT, and CLKT. Residues Glu187, His250, and His267 each contribute to the Zn(2+) site.

The protein belongs to the sugar phosphate cyclases superfamily. Dehydroquinate synthase family. NAD(+) is required as a cofactor. The cofactor is Co(2+). Requires Zn(2+) as cofactor.

The protein localises to the cytoplasm. It catalyses the reaction 7-phospho-2-dehydro-3-deoxy-D-arabino-heptonate = 3-dehydroquinate + phosphate. Its pathway is metabolic intermediate biosynthesis; chorismate biosynthesis; chorismate from D-erythrose 4-phosphate and phosphoenolpyruvate: step 2/7. Functionally, catalyzes the conversion of 3-deoxy-D-arabino-heptulosonate 7-phosphate (DAHP) to dehydroquinate (DHQ). In Buchnera aphidicola subsp. Acyrthosiphon pisum (strain APS) (Acyrthosiphon pisum symbiotic bacterium), this protein is 3-dehydroquinate synthase.